A 466-amino-acid polypeptide reads, in one-letter code: Phytase A (466 aa).

The first 19 residues, 1–19 (MAVLSVLLPITFLLSSVTG), serve as a signal peptide directing secretion. A disulfide bridge links C30 with C39. 6 residues coordinate 1D-myo-inositol hexakisphosphate: Q49, Y50, R80, H81, R84, and T87. Intrachain disulfides connect C70-C413, C214-C464, C263-C281, and C435-C443. The active-site Nucleophile is the H81. Residues N104 and N119 are each glycosylated (N-linked (GlcNAc...) asparagine). Residue R164 coordinates 1D-myo-inositol hexakisphosphate. N-linked (GlcNAc...) asparagine glycosylation is found at N206 and N219. A 1D-myo-inositol hexakisphosphate-binding site is contributed by K300. N-linked (GlcNAc...) asparagine glycosylation is found at N338 and N351. Residues H360 and D361 each coordinate 1D-myo-inositol hexakisphosphate. N375 carries N-linked (GlcNAc...) asparagine glycosylation.

Belongs to the histidine acid phosphatase family. Monomer.

The protein localises to the secreted. It catalyses the reaction 1D-myo-inositol hexakisphosphate + H2O = 1D-myo-inositol 1,2,4,5,6-pentakisphosphate + phosphate. It carries out the reaction 1D-myo-inositol 1,2,4,5,6-pentakisphosphate + H2O = 1D-myo-inositol 1,2,5,6-tetrakisphosphate + phosphate. The enzyme catalyses 1D-myo-inositol 1,2,5,6-tetrakisphosphate + H2O = 1D-myo-inositol 1,2,6-trisphosphate + phosphate. The catalysed reaction is 1D-myo-inositol 1,2,6-trisphosphate + H2O = 1D-myo-inositol 1,2-bisphosphate + phosphate. It catalyses the reaction 1D-myo-inositol 1,2-bisphosphate + H2O = 1D-myo-inositol 2-phosphate + phosphate. Its function is as follows. Catalyzes the phosphate monoester hydrolysis of phytic acid (myo-inositol hexakisphosphate), which results in the stepwise formation of myo-inositol pentakis-, tetrakis-, tris-, bis-, and monophosphates, as well as the liberation of inorganic phosphate. Myo-inositol 2-monophosphate is the end product. This is Phytase A (phyA) from Aspergillus oryzae (strain ATCC 42149 / RIB 40) (Yellow koji mold).